A 443-amino-acid polypeptide reads, in one-letter code: Cobyrinate a,c-diamide synthase (443 aa).

The 192-residue stretch at 244–435 (KVSVAMDSAF…AHIHFLSNPR (192 aa)) folds into the GATase cobBQ-type domain. The Nucleophile role is filled by Cys-327.

Belongs to the CobB/CbiA family. It depends on Mg(2+) as a cofactor.

The enzyme catalyses cob(II)yrinate + 2 L-glutamine + 2 ATP + 2 H2O = cob(II)yrinate a,c diamide + 2 L-glutamate + 2 ADP + 2 phosphate + 2 H(+). Its pathway is cofactor biosynthesis; adenosylcobalamin biosynthesis; cob(II)yrinate a,c-diamide from sirohydrochlorin (anaerobic route): step 10/10. Its function is as follows. Catalyzes the ATP-dependent amidation of the two carboxylate groups at positions a and c of cobyrinate, using either L-glutamine or ammonia as the nitrogen source. This is Cobyrinate a,c-diamide synthase from Thermoplasma acidophilum (strain ATCC 25905 / DSM 1728 / JCM 9062 / NBRC 15155 / AMRC-C165).